The sequence spans 263 residues: MNATTSAHHPLHIETIGQGPDLVVIHGWGVNSAVFTPLHEQLSEYRVHYVDLPGFGLSQPIAGNLSTWIDALINNLPTNAIWAGWSLGGLVATQAAIDYPSHIKGLITIASSPCFMAREEEAWPGIPPQVLSMFGEQLGQNLPKTIERFLAIQAMGSETAKEDIKQLRDLVLARPLPDAAALTQGLDMLNQIDLRMQLSSISQPWLRIWGRLDGLVPKRVQPQMPTASHITDVMLAKASHAPFVSHRQEFLQALLPWLTQFKD.

Residues Trp-28, Ser-86–Leu-87, and Phe-149–Gln-153 contribute to the substrate site. The active-site Nucleophile is the Ser-86. Residues Asp-213 and His-240 contribute to the active site. His-240 contributes to the substrate binding site.

The protein belongs to the AB hydrolase superfamily. Carboxylesterase BioH family. As to quaternary structure, monomer.

It is found in the cytoplasm. It catalyses the reaction 6-carboxyhexanoyl-[ACP] methyl ester + H2O = 6-carboxyhexanoyl-[ACP] + methanol + H(+). The protein operates within cofactor biosynthesis; biotin biosynthesis. The physiological role of BioH is to remove the methyl group introduced by BioC when the pimeloyl moiety is complete. It allows to synthesize pimeloyl-ACP via the fatty acid synthetic pathway through the hydrolysis of the ester bonds of pimeloyl-ACP esters. The sequence is that of Pimeloyl-[acyl-carrier protein] methyl ester esterase from Shewanella oneidensis (strain ATCC 700550 / JCM 31522 / CIP 106686 / LMG 19005 / NCIMB 14063 / MR-1).